Here is a 555-residue protein sequence, read N- to C-terminus: Formate--tetrahydrofolate ligase (555 aa).

63–70 is a binding site for ATP; sequence TPAGEGKT.

It belongs to the formate--tetrahydrofolate ligase family.

It catalyses the reaction (6S)-5,6,7,8-tetrahydrofolate + formate + ATP = (6R)-10-formyltetrahydrofolate + ADP + phosphate. The protein operates within one-carbon metabolism; tetrahydrofolate interconversion. This is Formate--tetrahydrofolate ligase from Beijerinckia indica subsp. indica (strain ATCC 9039 / DSM 1715 / NCIMB 8712).